A 379-amino-acid polypeptide reads, in one-letter code: Polycomb group protein FIE2 (379 aa).

6 WD repeats span residues 85–128 (DKDE…LAKS), 131–171 (GHGD…CILI), 177–217 (GHRN…LYVD), 243–280 (VHSN…QSPG), 292–333 (VPEC…PVLI), and 340–378 (QCKS…PSSR).

Belongs to the WD repeat ESC family. As to expression, widely expressed. Expressed in the embryo sac before pollination. After pollination, its expression persists, predominantly in the embryo and at lower levels in the endosperm.

The protein resides in the nucleus. Its function is as follows. Polycomb group (PcG) protein. PcG proteins act by forming multiprotein complexes, which are required to maintain the transcriptionally repressive state of homeotic genes throughout development. PcG proteins are not required to initiate repression, but to maintain it during later stages of development. They probably act via the methylation of histones, rendering chromatin heritably changed in its expressibility. In Zea mays (Maize), this protein is Polycomb group protein FIE2 (FIE2).